Here is a 480-residue protein sequence, read N- to C-terminus: Krueppel-like factor 10 (480 aa).

Positions 1-12 (MLNFGASLQQAS) are enriched in polar residues. Disordered regions lie at residues 1–32 (MLNF…PWDK), 64–83 (VTPV…TPDL), and 97–146 (PSDF…APPL). A compositionally biased stretch (basic and acidic residues) spans 14–32 (GKMELISEKSKEGAHPWDK). Phosphoserine is present on serine 183. A disordered region spans residues 202-222 (AAVSPNRPKPEPSTAANGAEK). Residue serine 249 is modified to Phosphoserine. 3 consecutive C2H2-type zinc fingers follow at residues 369–393 (HICS…VRTH), 399–423 (FSCS…RRTH), and 429–451 (FACP…ARRH).

Belongs to the Sp1 C2H2-type zinc-finger protein family. Ubiquitinated; mediated by SIAH1 and leading to its subsequent proteasomal degradation.

The protein resides in the nucleus. Its function is as follows. Transcriptional repressor which binds to the consensus sequence 5'-GGTGTG-3'. Regulates the circadian expression of genes involved in lipogenesis, gluconeogenesis, and glycolysis in the liver. Represses the expression of PCK2, a rate-limiting step enzyme of gluconeogenesis. May play a role in the cell cycle regulation. Plays a role in the regulation of the circadian clock; binds to the GC box sequence in the promoter of the core clock component ARTNL/BMAL1 and represses its transcriptional activity. The sequence is that of Krueppel-like factor 10 (Klf10) from Rattus norvegicus (Rat).